Reading from the N-terminus, the 408-residue chain is Argininosuccinate synthase (408 aa).

ATP-binding positions include 11-19 (AYSGGLDTS) and Ala38. L-citrulline contacts are provided by Tyr91 and Ser96. Gly121 lines the ATP pocket. Residues Thr123, Asn127, and Asp128 each contribute to the L-aspartate site. Asn127 lines the L-citrulline pocket. L-citrulline contacts are provided by Arg131, Ser182, Ser191, Glu267, and Tyr279.

The protein belongs to the argininosuccinate synthase family. Type 1 subfamily. Homotetramer.

It localises to the cytoplasm. It carries out the reaction L-citrulline + L-aspartate + ATP = 2-(N(omega)-L-arginino)succinate + AMP + diphosphate + H(+). It participates in amino-acid biosynthesis; L-arginine biosynthesis; L-arginine from L-ornithine and carbamoyl phosphate: step 2/3. The sequence is that of Argininosuccinate synthase from Zymomonas mobilis subsp. mobilis (strain ATCC 31821 / ZM4 / CP4).